A 243-amino-acid chain; its full sequence is 3-deoxy-manno-octulosonate cytidylyltransferase (243 aa).

The protein belongs to the KdsB family.

The protein localises to the cytoplasm. The enzyme catalyses 3-deoxy-alpha-D-manno-oct-2-ulosonate + CTP = CMP-3-deoxy-beta-D-manno-octulosonate + diphosphate. It functions in the pathway nucleotide-sugar biosynthesis; CMP-3-deoxy-D-manno-octulosonate biosynthesis; CMP-3-deoxy-D-manno-octulosonate from 3-deoxy-D-manno-octulosonate and CTP: step 1/1. Its function is as follows. Activates KDO (a required 8-carbon sugar) for incorporation into bacterial lipopolysaccharide in Gram-negative bacteria. The polypeptide is 3-deoxy-manno-octulosonate cytidylyltransferase (Wigglesworthia glossinidia brevipalpis).